The primary structure comprises 691 residues: DNA ligase (691 aa).

NAD(+)-binding positions include 41–45, 90–91, and Glu130; these read DAEYD and SL. The active-site N6-AMP-lysine intermediate is the Lys132. Residues Arg153, Glu190, Lys307, and Lys331 each coordinate NAD(+). Residues Cys425, Cys428, Cys443, and Cys449 each coordinate Zn(2+). One can recognise a BRCT domain in the interval 610-691; that stretch reads APQGVLAGKT…LHQLLEGNTP (82 aa).

This sequence belongs to the NAD-dependent DNA ligase family. LigA subfamily. It depends on Mg(2+) as a cofactor. The cofactor is Mn(2+).

The enzyme catalyses NAD(+) + (deoxyribonucleotide)n-3'-hydroxyl + 5'-phospho-(deoxyribonucleotide)m = (deoxyribonucleotide)n+m + AMP + beta-nicotinamide D-nucleotide.. Functionally, DNA ligase that catalyzes the formation of phosphodiester linkages between 5'-phosphoryl and 3'-hydroxyl groups in double-stranded DNA using NAD as a coenzyme and as the energy source for the reaction. It is essential for DNA replication and repair of damaged DNA. In Burkholderia cenocepacia (strain ATCC BAA-245 / DSM 16553 / LMG 16656 / NCTC 13227 / J2315 / CF5610) (Burkholderia cepacia (strain J2315)), this protein is DNA ligase.